Here is a 406-residue protein sequence, read N- to C-terminus: Lysosome-associated membrane glycoprotein 1 (406 aa).

The signal sequence occupies residues M1–A24. The interval L25 to D188 is first lumenal domain. Topologically, residues L25 to N370 are lumenal. N-linked (GlcNAc...) asparagine glycans are attached at residues N31, N52, N58, N70, N78, N97, N101, N115, N159, and N177. C35 and C74 are joined by a disulfide. The cysteines at positions 149 and 185 are disulfide-linked. The tract at residues K180 to N207 is disordered. A hinge region spans residues G189 to N218. Over residues T193–P205 the composition is skewed to pro residues. N-linked (GlcNAc...) asparagine glycans are attached at residues N214, N219, N232, and N240. The segment at N219–N370 is second lumenal domain. The cysteines at positions 222 and 259 are disulfide-linked. N-linked (GlcNAc...) (high mannose) asparagine glycosylation occurs at N252. Residues N282, N296, and N311 are each glycosylated (N-linked (GlcNAc...) asparagine). An intrachain disulfide couples C327 to C364. A helical transmembrane segment spans residues M371 to I394. Residues G395 to I406 are Cytoplasmic-facing.

The protein belongs to the LAMP family. Interacts with ABCB9; this interaction strongly stabilizes ABCB9 and protects ABCB9 against lysosomal degradation. Interacts with FURIN. Interacts with TMEM175; inhibiting the proton channel activity of TMEM175. Post-translationally, O- and N-glycosylated; some of the N-glycans attached to LAMP-1 are polylactosaminoglycans.

It localises to the lysosome membrane. The protein resides in the endosome membrane. The protein localises to the late endosome membrane. Its subcellular location is the cell membrane. It is found in the cytolytic granule membrane. Lysosomal membrane glycoprotein which plays an important role in lysosome biogenesis, lysosomal pH regulation, autophagy and cholesterol homeostasis. Acts as an important regulator of lysosomal lumen pH regulation by acting as a direct inhibitor of the proton channel TMEM175, facilitating lysosomal acidification for optimal hydrolase activity. Also plays an important role in NK-cells cytotoxicity. Mechanistically, participates in cytotoxic granule movement to the cell surface and perforin trafficking to the lytic granule. In addition, protects NK-cells from degranulation-associated damage induced by their own cytotoxic granule content. Presents carbohydrate ligands to selectins. Also implicated in tumor cell metastasis. This is Lysosome-associated membrane glycoprotein 1 (Lamp1) from Mus musculus (Mouse).